Here is a 114-residue protein sequence, read N- to C-terminus: Methylamine utilization protein MauL (114 aa).

The protein operates within one-carbon metabolism; methylamine degradation. Probably involved in TTQ prosthetic group biosynthesis. This Methylorubrum extorquens (strain ATCC 14718 / DSM 1338 / JCM 2805 / NCIMB 9133 / AM1) (Methylobacterium extorquens) protein is Methylamine utilization protein MauL (mauL).